Reading from the N-terminus, the 200-residue chain is Holliday junction branch migration complex subunit RuvA (200 aa).

Residues 1–64 are domain I; it reads MIGHLRGIIV…EDAHTLYGFH (64 aa). A domain II region spans residues 65-143; it reads NDHERRLFRA…RWHTNDTPSP (79 aa). The disordered stretch occupies residues 133–152; it reads SRWHTNDTPSPEGLRSSNTQ. The segment at 144 to 148 is flexible linker; that stretch reads EGLRS. Positions 149 to 200 are domain III; that stretch reads SNTQPTQDAISALMALGYKPQEAKRAIDAIQKPDLSAETLIRLALKQMVLGT.

Belongs to the RuvA family. As to quaternary structure, homotetramer. Forms an RuvA(8)-RuvB(12)-Holliday junction (HJ) complex. HJ DNA is sandwiched between 2 RuvA tetramers; dsDNA enters through RuvA and exits via RuvB. An RuvB hexamer assembles on each DNA strand where it exits the tetramer. Each RuvB hexamer is contacted by two RuvA subunits (via domain III) on 2 adjacent RuvB subunits; this complex drives branch migration. In the full resolvosome a probable DNA-RuvA(4)-RuvB(12)-RuvC(2) complex forms which resolves the HJ.

The protein localises to the cytoplasm. The RuvA-RuvB-RuvC complex processes Holliday junction (HJ) DNA during genetic recombination and DNA repair, while the RuvA-RuvB complex plays an important role in the rescue of blocked DNA replication forks via replication fork reversal (RFR). RuvA specifically binds to HJ cruciform DNA, conferring on it an open structure. The RuvB hexamer acts as an ATP-dependent pump, pulling dsDNA into and through the RuvAB complex. HJ branch migration allows RuvC to scan DNA until it finds its consensus sequence, where it cleaves and resolves the cruciform DNA. The chain is Holliday junction branch migration complex subunit RuvA from Coxiella burnetii (strain CbuK_Q154) (Coxiella burnetii (strain Q154)).